Consider the following 82-residue polypeptide: Cytochrome c-551 (82 aa).

4 residues coordinate heme c: Cys12, Cys15, His16, and Met61.

Post-translationally, binds 1 heme c group covalently per subunit.

Its function is as follows. This is a prokaryotic monoheme cytochrome, unreactive with mitochondrial cytochrome C oxidase or reductase. It functions in nitrite and nitrate respiration in Pseudomonas, but it is also found in other bacteria. This chain is Cytochrome c-551, found in Pseudomonas denitrificans.